We begin with the raw amino-acid sequence, 309 residues long: Protein FdhE (309 aa).

Belongs to the FdhE family.

The protein localises to the cytoplasm. Functionally, necessary for formate dehydrogenase activity. The sequence is that of Protein FdhE from Salmonella typhimurium (strain LT2 / SGSC1412 / ATCC 700720).